The sequence spans 470 residues: Sulfate adenylyltransferase subunit 1 (470 aa).

Residues 22 to 237 (KEVLRFITCG…LEEVPVKSEE (216 aa)) form the tr-type G domain. The G1 stretch occupies residues 31–38 (GSVDDGKS). 31 to 38 (GSVDDGKS) lines the GTP pocket. A G2 region spans residues 89 to 93 (GITID). The interval 110–113 (DTPG) is G3. GTP contacts are provided by residues 110–114 (DTPGH) and 165–168 (NKMD). The segment at 165–168 (NKMD) is G4. Residues 202-204 (SAK) are G5.

This sequence belongs to the TRAFAC class translation factor GTPase superfamily. Classic translation factor GTPase family. CysN/NodQ subfamily. In terms of assembly, heterodimer composed of CysD, the smaller subunit, and CysN.

The catalysed reaction is sulfate + ATP + H(+) = adenosine 5'-phosphosulfate + diphosphate. It participates in sulfur metabolism; hydrogen sulfide biosynthesis; sulfite from sulfate: step 1/3. Its function is as follows. With CysD forms the ATP sulfurylase (ATPS) that catalyzes the adenylation of sulfate producing adenosine 5'-phosphosulfate (APS) and diphosphate, the first enzymatic step in sulfur assimilation pathway. APS synthesis involves the formation of a high-energy phosphoric-sulfuric acid anhydride bond driven by GTP hydrolysis by CysN coupled to ATP hydrolysis by CysD. This Methylorubrum populi (strain ATCC BAA-705 / NCIMB 13946 / BJ001) (Methylobacterium populi) protein is Sulfate adenylyltransferase subunit 1.